The following is a 148-amino-acid chain: Large ribosomal subunit protein uL13 (148 aa).

This sequence belongs to the universal ribosomal protein uL13 family. Part of the 50S ribosomal subunit.

Its function is as follows. This protein is one of the early assembly proteins of the 50S ribosomal subunit, although it is not seen to bind rRNA by itself. It is important during the early stages of 50S assembly. In Ureaplasma parvum serovar 3 (strain ATCC 27815 / 27 / NCTC 11736), this protein is Large ribosomal subunit protein uL13.